Reading from the N-terminus, the 769-residue chain is Polymeric immunoglobulin receptor (769 aa).

A signal peptide spans M1 to T18. At Q19–K643 the chain is on the extracellular side. Residues P21–E126 enclose the Ig-like V-type 1; required for binding to polymeric IgA and IgM domain. A disulfide bridge links C40 with C110. N-linked (GlcNAc...) asparagine glycans are attached at residues N90, N135, and N206. 4 consecutive Ig-like V-type domains span residues N135–V237, P240–W341, N353–A457, and P463–A563. Intrachain disulfides connect C152/C220, C257/C324, and C370/C440. N471 is a glycosylation site (N-linked (GlcNAc...) asparagine). C484 and C546 are joined by a disulfide. Disordered stretches follow at residues R569–N604 and A619–G640. A compositionally biased stretch (basic and acidic residues) spans S595–N604. The chain crosses the membrane as a helical span at residues V644–A666. The Cytoplasmic segment spans residues R667–A769. Phosphoserine is present on residues S678, S687, S694, and S740. The segment at E719–K741 is disordered. The span at E731–K741 shows a compositional bias: basic and acidic residues.

As to quaternary structure, interacts (mainly via CDR1-like domain) with dimeric IgA. Interacts (mainly via CDR2-like domain) with pentameric IgM. Either free or part of the secretory IgA (sIgA) complex that consists of two, four or five IgA monomers, and two additional non-Ig polypeptides, namely the JCHAIN and the secretory component (the proteolytic product of PIGR). Free secretory component interacts with bacterial antigens toxA of C.difficile and eae of E.coli. Post-translationally, N-glycosylated. N-glycosylation is required for anchoring IgA molecules to mucus, but is not necessary for Ig binding.

Its subcellular location is the cell membrane. The protein localises to the secreted. Its function is as follows. Mediates selective transcytosis of polymeric IgA and IgM across mucosal epithelial cells. Binds polymeric IgA and IgM at the basolateral surface of epithelial cells. The complex is then transported across the cell to be secreted at the apical surface. During this process, a cleavage occurs that separates the extracellular (known as the secretory component) from the transmembrane segment. In terms of biological role, through its N-linked glycans ensures anchoring of secretory IgA (sIgA) molecules to mucus lining the epithelial surface to neutralize extracellular pathogens. On its own (free form) may act as a non-specific microbial scavenger to prevent pathogen interaction with epithelial cells. The sequence is that of Polymeric immunoglobulin receptor (Pigr) from Rattus norvegicus (Rat).